We begin with the raw amino-acid sequence, 1322 residues long: MMEIQMDEGGGVVVYQDDYCSGSVMSERVSGLAGSIYREFERLIHCYDEEVVKELMPLVVNVLENLDSVLSENQEHEVELELLREDNEQLLTQYEREKALRKQAEEKFIEFEDALEQEKKELQIQVEHYEFQTRQLELKAKNYADQISRLEERESEMKKEYNALHQRHTEMIQTYVEHIERSKMQQVGGGGQTESSLPGRSRKERPTSLNVFPLADGMVRAQMGGKLVPAGDHWHLSDLGQLQSSSSYQCPNDEMSESGQSSAAATPSTTGTKSNTPTSSVPSAAVTPLNESLQPLGDYGSVTKNNKRAREKRNSRNMEVQVTQEMRNVSIGMGSSDEWSDVQDIIDSTPELDVCPETRLDRTGSSPTQGIVNKAFGINTDSLYHELSTAGSEVIGDVDEGADLLGEFSGMGKEVGNLLLENSQLLETKNALNVVKNDLIAKVDQLSGEQEVLKGELEAAKQAKVKLENRIKELEEELKRVKSEAVTARREPREEVEDDKIPMAQRRRFTRVEMARVLMERNQYKERLMELQEAVRWTEMIRASREHPSVQEKKKSTIWQFFSRLFSSSSSPPPAKRSYPSVNIHYKSPTTAGFSQRRNHALCQISAGSRPLEFFPDDDCTSSARREQKREQYRQVREHVRNDDGRLQACGWSLPAKYKQLSPNGGQEDTRMKNVPVPVYCRPLVEKDPSTKLWCAAGVNLSGWKPNEEDSSNGPKPAPGRDPLTCDREGEGEPKSTHPSPEKKKAKEVPEADATSSRVWILTSTLTTSKVVIIDANQPGTVVDQFTVCNAHVLCISSIPAASDSDYPPGDMFLDSDVNPEDSGADGVLAGITLVGCATRCNVPRSNCSSRGDTPVLDKGQGDVAATANGKVNPSQSTEEATEATEVPDPGPSESEATTVRPGPLTEHVFTDPAPTQSSSTQPASENGSESDGSIVQPQVEPSGESSATTSSAAPTMWLGAQNGWLYVHSAVANWKKCLHSIKLKDSVLSLVHVKGRVLVALADGTLAIFHRGEDGQWDLSNYHLMDLGHPHHSIRCMAVVDDRVWCGYKNKVHVIQPKTMQIEKSFDAHPRRESQVRQLAWIGDGVWVSIRLDSTLRLYHAHTHQHLQDVDIEPYVSKMLGTGKLGFSFVRITALLIAGNRLWVGTGNGVVISIPLTETVVLHRGQLLGLRANKTSPTSGEGTRPGGIIHVYGDDSSDKTASSFIPYCSMAQAQLCFHGHRDAVKFFVSVPGNVLATLNGSVLDSPSEGPGPAAPAADAEGQKLKNALVLSGGEGYIDFRIGDGEDDETEEGTGDVNQTKPSLSKAERSHIIVWQVSYTPE.

Residues 12 to 100 (VVVYQDDYCS…LTQYEREKAL (89 aa)) form the RH1 domain. The tract at residues 50–80 (EVVKELMPLVVNVLENLDSVLSENQEHEVEL) is kinesin-binding domain (KBD); essential for its function in axon elongation. Residues 66-167 (LDSVLSENQE…KKEYNALHQR (102 aa)) are a coiled coil. 2 disordered regions span residues 183-211 (KMQQVGGGGQTESSLPGRSRKERPTSLNV) and 245-317 (SSSY…NSRN). The interval 210 to 226 (NVFPLADGMVRAQMGGK) is JNK-binding domain (JBD); essential for its function in axon elongation. Residues 261-270 (SSAAATPSTT) are compositionally biased toward low complexity. Phosphothreonine occurs at positions 266, 276, and 287. The span at 271–282 (GTKSNTPTSSVP) shows a compositional bias: polar residues. The segment covering 305-315 (NNKRAREKRNS) has biased composition (basic residues). Phosphoserine is present on residues serine 315, serine 365, and serine 366. Positions 424–459 (QLLETKNALNVVKNDLIAKVDQLSGEQEVLKGELEA) are leucine zipper-like domain (LZ); essential for its function in axon elongation. Residues 443-534 (VDQLSGEQEV…KERLMELQEA (92 aa)) are a coiled coil. Residues 459-515 (AAKQAKVKLENRIKELEEELKRVKSEAVTARREPREEVEDDKIPMAQRRRFTRVEMA) are interaction with NTRK2. Positions 506 to 580 (RRRFTRVEMA…SPPPAKRSYP (75 aa)) constitute an RH2 domain. Phosphoserine is present on residues serine 588 and serine 662. Disordered stretches follow at residues 704–754 (WKPN…EADA), 844–952 (PRSN…TTSS), and 1281–1307 (RIGDGEDDETEEGTGDVNQTKPSLSKA). Positions 724-750 (LTCDREGEGEPKSTHPSPEKKKAKEVP) are enriched in basic and acidic residues. Residues 914 to 937 (APTQSSSTQPASENGSESDGSIVQ) are compositionally biased toward polar residues. Residues 941-952 (EPSGESSATTSS) show a composition bias toward low complexity. Residues 1285–1294 (GEDDETEEGT) are compositionally biased toward acidic residues.

The protein belongs to the JIP scaffold family. Forms homo- or heterooligomeric complexes. The central region of MAPK8IP3 interacts with the C-terminal of MAPK8IP2 but not MAPK8IP1. Binds specific components of the JNK signaling pathway namely MAPK8/JNK1, MAPK9/JNK2 and MAPK10/JNK3 to the N-terminal region, MAP2K4/MKK4 and MAP2K7/MKK7 to the central region and MAP3K11 to the C-terminal region. Binds the TPR motif-containing C-terminal of kinesin light chain, KLC1. Pre-assembled MAPK8IP1 scaffolding complexes are then transported as a cargo of kinesin, to the required subcellular location. Interacts with ROCK1 and this interaction is enhanced by ultraviolet-B (UVB) radiation. Interacts with SH3RF2. Interacts with NTRK3/TRKC. Interacts with NTRK2/TRKB. In terms of processing, phosphorylation by ROCK1 is crucial for the recruitment of JNK.

Its subcellular location is the cytoplasm. It is found in the golgi apparatus. The protein resides in the cytoplasmic vesicle. The protein localises to the cell projection. It localises to the growth cone. Its subcellular location is the axon. It is found in the dendrite. The protein resides in the perinuclear region. The JNK-interacting protein (JIP) group of scaffold proteins selectively mediates JNK signaling by aggregating specific components of the MAPK cascade to form a functional JNK signaling module. May function as a regulator of vesicle transport, through interactions with the JNK-signaling components and motor proteins. Promotes neuronal axon elongation in a kinesin- and JNK-dependent manner. Activates cofilin at axon tips via local activation of JNK, thereby regulating filopodial dynamics and enhancing axon elongation. Its binding to kinesin heavy chains (KHC), promotes kinesin-1 motility along microtubules and is essential for axon elongation and regeneration. Regulates cortical neuronal migration by mediating NTRK2/TRKB anterograde axonal transport during brain development. Acts as an adapter that bridges the interaction between NTRK2/TRKB and KLC1 and drives NTRK2/TRKB axonal but not dendritic anterograde transport, which is essential for subsequent BDNF-triggered signaling and filopodia formation. This is C-Jun-amino-terminal kinase-interacting protein 3 (Mapk8ip3) from Rattus norvegicus (Rat).